A 658-amino-acid chain; its full sequence is Carnitine O-palmitoyltransferase 2, mitochondrial (658 aa).

A mitochondrion-targeting transit peptide spans 1–25; sequence MVPRLLLRAWPRGPAVGPGAPSRPL. The Mitochondrial matrix portion of the chain corresponds to 26–178; the sequence is SAGSGPGQYL…GLLEPEVFHL (153 aa). Residue Lys69 is modified to N6-succinyllysine. Position 79 is an N6-acetyllysine (Lys79). Residue Lys85 is modified to N6-succinyllysine. Positions 179 to 208 form an intramembrane region, note=Mitochondrial inner membrane; the sequence is NPAKSDTITFKRLIRFVPSSLSWYGAYLVN. The Mitochondrial matrix portion of the chain corresponds to 209-658; that stretch reads AYPLDMSQYF…DALEGKSIKS (450 aa). The residue at position 239 (Lys239) is an N6-acetyllysine; alternate. Lys239 carries the post-translational modification N6-succinyllysine; alternate. N6-acetyllysine is present on Lys305. The active-site Proton acceptor is His372. An N6-succinyllysine mark is found at Lys424 and Lys439. 452–464 is a binding site for CoA; the sequence is GKEFLKKQKLSPD. (R)-carnitine is bound by residues Tyr486, Ser488, and Thr499. An N6-acetyllysine; alternate mark is found at Lys510 and Lys544. Lys510 and Lys544 each carry N6-succinyllysine; alternate.

This sequence belongs to the carnitine/choline acetyltransferase family.

The protein resides in the mitochondrion inner membrane. It catalyses the reaction (R)-carnitine + hexadecanoyl-CoA = O-hexadecanoyl-(R)-carnitine + CoA. It carries out the reaction octanoyl-CoA + (R)-carnitine = O-octanoyl-(R)-carnitine + CoA. The catalysed reaction is decanoyl-CoA + (R)-carnitine = O-decanoyl-(R)-carnitine + CoA. The enzyme catalyses dodecanoyl-CoA + (R)-carnitine = O-dodecanoyl-R-carnitine + CoA. It catalyses the reaction tetradecanoyl-CoA + (R)-carnitine = O-tetradecanoyl-(R)-carnitine + CoA. It carries out the reaction (R)-carnitine + octadecanoyl-CoA = O-octadecanoyl-(R)-carnitine + CoA. The catalysed reaction is eicosanoyl-CoA + (R)-carnitine = O-eicosanoyl-(R)-carnitine + CoA. The enzyme catalyses (9Z)-tetradecenoyl-CoA + (R)-carnitine = O-(9Z)-tetradecenoyl-(R)-carnitine + CoA. It catalyses the reaction (5Z)-tetradecenoyl-CoA + (R)-carnitine = O-(5Z)-tetradecenoyl-(R)-carnitine + CoA. It carries out the reaction (R)-carnitine + (9Z)-octadecenoyl-CoA = O-(9Z)-octadecenoyl-(R)-carnitine + CoA. The catalysed reaction is 4,8-dimethylnonanoyl-CoA + (R)-carnitine = O-4,8-dimethylnonanoyl-(R)-carnitine + CoA. Its pathway is lipid metabolism; fatty acid beta-oxidation. With respect to regulation, inhibited by trans-2-hexadecanoyl-CoA. In terms of biological role, involved in the intramitochondrial synthesis of acylcarnitines from accumulated acyl-CoA metabolites. Reconverts acylcarnitines back into the respective acyl-CoA esters that can then undergo beta-oxidation, an essential step for the mitochondrial uptake of long-chain fatty acids and their subsequent beta-oxidation in the mitochondrion. Active with medium (C8-C12) and long-chain (C14-C18) acyl-CoA esters. This Homo sapiens (Human) protein is Carnitine O-palmitoyltransferase 2, mitochondrial.